A 259-amino-acid polypeptide reads, in one-letter code: 7-cyano-7-deazaguanine synthase (259 aa).

ATP is bound at residue 32 to 42 (LSGGLDSVTCL). Cys223, Cys233, Cys236, and Cys239 together coordinate Zn(2+).

This sequence belongs to the QueC family. It depends on Zn(2+) as a cofactor.

It catalyses the reaction 7-carboxy-7-deazaguanine + NH4(+) + ATP = 7-cyano-7-deazaguanine + ADP + phosphate + H2O + H(+). The protein operates within purine metabolism; 7-cyano-7-deazaguanine biosynthesis. Catalyzes the ATP-dependent conversion of 7-carboxy-7-deazaguanine (CDG) to 7-cyano-7-deazaguanine (preQ(0)). The polypeptide is 7-cyano-7-deazaguanine synthase (Psychrobacter arcticus (strain DSM 17307 / VKM B-2377 / 273-4)).